Consider the following 194-residue polypeptide: Adenylate kinase isoenzyme 1 (194 aa).

At Met1 the chain carries N-acetylmethionine. 18–23 lines the ATP pocket; that stretch reads GSGKGT. Ser38 bears the Phosphoserine mark. Residues 38-67 form an NMP region; the sequence is STGDLLRSEVSSGSARGKKLSEIMEKGQLV. AMP-binding positions include Thr39, Arg44, 65–67, 94–97, and Gln101; these read QLV and GYPR. The LID stretch occupies residues 131–141; sequence KRGETSGRVDD. Arg132 provides a ligand contact to ATP. Arg138 and Arg149 together coordinate AMP. ATP is bound at residue Gly177.

Belongs to the adenylate kinase family. AK1 subfamily. In terms of assembly, monomer. Mg(2+) serves as cofactor.

The protein resides in the cytoplasm. It carries out the reaction a ribonucleoside 5'-phosphate + ATP = a ribonucleoside 5'-diphosphate + ADP. It catalyses the reaction AMP + ATP = 2 ADP. The catalysed reaction is dAMP + ATP = dADP + ADP. The enzyme catalyses dATP + AMP = dADP + ADP. It carries out the reaction dAMP + dATP = 2 dADP. It catalyses the reaction a 2'-deoxyribonucleoside 5'-diphosphate + ATP = a 2'-deoxyribonucleoside 5'-triphosphate + ADP. The catalysed reaction is a ribonucleoside 5'-diphosphate + ATP = a ribonucleoside 5'-triphosphate + ADP. The enzyme catalyses CDP + GTP = CTP + GDP. It carries out the reaction GDP + ATP = GTP + ADP. It catalyses the reaction UDP + ATP = UTP + ADP. The catalysed reaction is GTP + UDP = UTP + GDP. The enzyme catalyses dTDP + GTP = dTTP + GDP. It carries out the reaction dCDP + GTP = dCTP + GDP. It catalyses the reaction dGDP + ATP = dGTP + ADP. The catalysed reaction is dADP + GTP = dATP + GDP. The enzyme catalyses thiamine diphosphate + ADP = thiamine triphosphate + AMP. Catalyzes the reversible transfer of the terminal phosphate group between ATP and AMP. Also displays broad nucleoside diphosphate kinase activity. Plays an important role in cellular energy homeostasis and in adenine nucleotide metabolism. Also catalyzes at a very low rate the synthesis of thiamine triphosphate (ThTP) from thiamine diphosphate (ThDP) and ADP. This chain is Adenylate kinase isoenzyme 1, found in Homo sapiens (Human).